We begin with the raw amino-acid sequence, 210 residues long: ATP-dependent Clp protease proteolytic subunit (210 aa).

S106 functions as the Nucleophile in the catalytic mechanism. H131 is a catalytic residue.

This sequence belongs to the peptidase S14 family. As to quaternary structure, fourteen ClpP subunits assemble into 2 heptameric rings which stack back to back to give a disk-like structure with a central cavity, resembling the structure of eukaryotic proteasomes.

The protein resides in the cytoplasm. The enzyme catalyses Hydrolysis of proteins to small peptides in the presence of ATP and magnesium. alpha-casein is the usual test substrate. In the absence of ATP, only oligopeptides shorter than five residues are hydrolyzed (such as succinyl-Leu-Tyr-|-NHMec, and Leu-Tyr-Leu-|-Tyr-Trp, in which cleavage of the -Tyr-|-Leu- and -Tyr-|-Trp bonds also occurs).. Its function is as follows. Cleaves peptides in various proteins in a process that requires ATP hydrolysis. Has a chymotrypsin-like activity. Plays a major role in the degradation of misfolded proteins. This chain is ATP-dependent Clp protease proteolytic subunit, found in Azospirillum brasilense.